Consider the following 511-residue polypeptide: Alpha-amylase 1A (511 aa).

The first 15 residues, 1 to 15, serve as a signal peptide directing secretion; sequence MKLFWLLFTIGFCWA. A Pyrrolidone carboxylic acid modification is found at Gln16. Disulfide bonds link Cys43–Cys101, Cys85–Cys130, and Cys156–Cys175. Ca(2+) is bound by residues Asn115, Arg173, and Asp182. Arg210 is a binding site for chloride. Residue Asp212 is the Nucleophile of the active site. Residue His216 coordinates Ca(2+). Catalysis depends on Glu248, which acts as the Proton donor. Positions 313 and 352 each coordinate chloride. At Asn365 the chain carries Deamidated asparagine; partial. A disulfide bridge connects residues Cys393 and Cys399. Asn427 is subject to Deamidated asparagine; partial; alternate. An N-linked (GlcNAc...) asparagine glycan is attached at Asn427. A disulfide bridge connects residues Cys465 and Cys477. Residue Asn474 is modified to Deamidated asparagine; partial. Asn476 is a glycosylation site (N-linked (GlcNAc...) asparagine).

The protein belongs to the glycosyl hydrolase 13 family. In terms of assembly, monomer. The cofactor is Ca(2+). Chloride is required as a cofactor.

The protein localises to the secreted. The enzyme catalyses Endohydrolysis of (1-&gt;4)-alpha-D-glucosidic linkages in polysaccharides containing three or more (1-&gt;4)-alpha-linked D-glucose units.. In terms of biological role, calcium-binding enzyme that initiates starch digestion in the oral cavity. Catalyzes the hydrolysis of internal (1-&gt;4)-alpha-D-glucosidic bonds, yielding a mixture of maltose, isomaltose, small amounts of glucose as well as small linear and branched oligosaccharides called dextrins. In Homo sapiens (Human), this protein is Alpha-amylase 1A.